A 253-amino-acid chain; its full sequence is Large ribosomal subunit protein bL28m (253 aa).

The transit peptide at 1 to 55 (MPLHKYPPALWDVLKLKDGIYARLPEHYRRSLLEKHKPYPVHWKPHGLKYRLNPK) directs the protein to the mitochondrion.

It belongs to the bacterial ribosomal protein bL28 family. In terms of assembly, component of the mitochondrial ribosome large subunit (39S) which comprises a 16S rRNA and about 50 distinct proteins.

Its subcellular location is the mitochondrion. The polypeptide is Large ribosomal subunit protein bL28m (mrpl28) (Xenopus laevis (African clawed frog)).